The following is a 702-amino-acid chain: Threonine--tRNA ligase (702 aa).

A disordered region spans residues 1 to 30; that stretch reads MSAPVHPVPGADGGDPLRPATPGLRSPQVP. One can recognise a TGS domain in the interval 15 to 84; the sequence is DPLRPATPGL…DVDVEVTPVP (70 aa). A catalytic region spans residues 279 to 585; the sequence is DHRKLGIELD…LTEHYAGAFP (307 aa). Positions 384, 435, and 562 each coordinate Zn(2+).

It belongs to the class-II aminoacyl-tRNA synthetase family. As to quaternary structure, homodimer. Zn(2+) is required as a cofactor.

It is found in the cytoplasm. The enzyme catalyses tRNA(Thr) + L-threonine + ATP = L-threonyl-tRNA(Thr) + AMP + diphosphate + H(+). Catalyzes the attachment of threonine to tRNA(Thr) in a two-step reaction: L-threonine is first activated by ATP to form Thr-AMP and then transferred to the acceptor end of tRNA(Thr). Also edits incorrectly charged L-seryl-tRNA(Thr). The polypeptide is Threonine--tRNA ligase (Mycobacterium leprae (strain Br4923)).